An 83-amino-acid chain; its full sequence is Putative membrane protein insertion efficiency factor (83 aa).

The segment at 64-83 (GGFDPVPLKKDKNSKTTHHH) is disordered.

The protein belongs to the UPF0161 family.

The protein localises to the cell membrane. Could be involved in insertion of integral membrane proteins into the membrane. The protein is Putative membrane protein insertion efficiency factor of Staphylococcus epidermidis (strain ATCC 12228 / FDA PCI 1200).